A 240-amino-acid chain; its full sequence is 2,3,4,5-tetrahydropyridine-2,6-dicarboxylate N-acetyltransferase (240 aa).

Belongs to the transferase hexapeptide repeat family. DapH subfamily.

The enzyme catalyses (S)-2,3,4,5-tetrahydrodipicolinate + acetyl-CoA + H2O = L-2-acetamido-6-oxoheptanedioate + CoA. It functions in the pathway amino-acid biosynthesis; L-lysine biosynthesis via DAP pathway; LL-2,6-diaminopimelate from (S)-tetrahydrodipicolinate (acetylase route): step 1/3. Functionally, catalyzes the transfer of an acetyl group from acetyl-CoA to tetrahydrodipicolinate. This is 2,3,4,5-tetrahydropyridine-2,6-dicarboxylate N-acetyltransferase from Staphylococcus epidermidis (strain ATCC 35984 / DSM 28319 / BCRC 17069 / CCUG 31568 / BM 3577 / RP62A).